A 465-amino-acid polypeptide reads, in one-letter code: MSQGKIVQIIGAVVDVEFPRDMIPRVYDALKLDENGLTLEVQQLLGDGVVRAIAMGSSDGLKRGMTVSNTGAPITVPVGKGTLGRIVDVLGTPVDEAGPIDTDKSRAIHQAAPKFDELSSTTELLETGIKVIDLLCPFAKGGKVGLFGGAGVGKTVNMMELINNIAKAHSGLSVFAGVGERTREGNDFYHEMKDSNVLDKVAMVYGQMNEPPGNRLRVALTGLTMAEYFRDEKDENGKGRDVLFFVDNIYRYTLAGTEVSALLGRMPSAVGYQPTLAEEMGRLQERITSTQTGSITSIQAVYVPADDLTDPSPATTFAHLDATVVLSRDIASLGIYPAVDPLDSTSRQLDPMVLGQEHYDVARGVQSTLQKYKELRDIIAILGMDELSDEDKLTVMRARKIQRFLSQPFHVAEVFTGSPGKYVALRDTIAGFKAILNGEYDHLPEQAFYMVGSIEEAVEKAKTLN.

Residue 148–155 (GGAGVGKT) coordinates ATP.

Belongs to the ATPase alpha/beta chains family. In terms of assembly, F-type ATPases have 2 components, CF(1) - the catalytic core - and CF(0) - the membrane proton channel. CF(1) has five subunits: alpha(3), beta(3), gamma(1), delta(1), epsilon(1). CF(0) has three main subunits: a(1), b(2) and c(9-12). The alpha and beta chains form an alternating ring which encloses part of the gamma chain. CF(1) is attached to CF(0) by a central stalk formed by the gamma and epsilon chains, while a peripheral stalk is formed by the delta and b chains.

It localises to the cell inner membrane. The enzyme catalyses ATP + H2O + 4 H(+)(in) = ADP + phosphate + 5 H(+)(out). Its function is as follows. Produces ATP from ADP in the presence of a proton gradient across the membrane. The catalytic sites are hosted primarily by the beta subunits. This chain is ATP synthase subunit beta, found in Neisseria meningitidis serogroup B (strain ATCC BAA-335 / MC58).